Consider the following 143-residue polypeptide: Large ribosomal subunit protein uL11 (143 aa).

It belongs to the universal ribosomal protein uL11 family. Part of the ribosomal stalk of the 50S ribosomal subunit. Interacts with L10 and the large rRNA to form the base of the stalk. L10 forms an elongated spine to which L12 dimers bind in a sequential fashion forming a multimeric L10(L12)X complex. One or more lysine residues are methylated.

Its function is as follows. Forms part of the ribosomal stalk which helps the ribosome interact with GTP-bound translation factors. In Laribacter hongkongensis (strain HLHK9), this protein is Large ribosomal subunit protein uL11.